The sequence spans 359 residues: Very-long-chain (3R)-3-hydroxyacyl-CoA dehydratase (359 aa).

Residues 1 to 144 lie on the Cytoplasmic side of the membrane; the sequence is MSALTPHVYW…RKDPFLGLKK (144 aa). The CS domain occupies 3 to 92; the sequence is ALTPHVYWAQ…QEEVWWNRLT (90 aa). Residues 109-133 are a coiled coil; sequence LDESDAEMELREKEEKINKVSFESR. A helical membrane pass occupies residues 145-165; that stretch reads GFLFMYNLVQFLGYSWIFVNM. At 166-186 the chain is on the lumenal side; the sequence is TVRLFILGQDSFYDTFHTIAD. A helical membrane pass occupies residues 187–207; sequence VMYFCQMLAIMEVINPAVGLV. Topologically, residues 208–209 are cytoplasmic; the sequence is KT. A helical membrane pass occupies residues 210-230; it reads GVMPAFIQVMGRNFILFVIFG. Over 231-239 the chain is Lumenal; it reads SLEDMQNKP. Residues 240–260 form a helical membrane-spanning segment; that stretch reads VVFFVFYLWSTIEIFRYPFYM. Residues 261 to 277 lie on the Cytoplasmic side of the membrane; that stretch reads LACIDTEWKLLTWLRYT. A helical transmembrane segment spans residues 278-298; sequence IWMPLYPLGVLAEAVAVIQSI. Active-site residues include Tyr283 and Glu290. At 299–317 the chain is on the lumenal side; it reads PIFDETKLLSIPLPKATGL. The helical transmembrane segment at 318 to 338 threads the bilayer; it reads SLSFSYILQLYLVVMFLGLFI. Residues 339–359 lie on the Cytoplasmic side of the membrane; the sequence is NFRHLFKQRTRRFRTKKRKAN.

Belongs to the very long-chain fatty acids dehydratase HACD family.

It is found in the endoplasmic reticulum membrane. The catalysed reaction is a very-long-chain (3R)-3-hydroxyacyl-CoA = a very-long-chain (2E)-enoyl-CoA + H2O. It catalyses the reaction (3R)-hydroxyhexadecanoyl-CoA = (2E)-hexadecenoyl-CoA + H2O. Its pathway is lipid metabolism; fatty acid biosynthesis. Catalyzes the third of the four reactions of the long-chain fatty acids elongation cycle. This endoplasmic reticulum-bound enzymatic process, allows the addition of two carbons to the chain of long- and very long-chain fatty acids/VLCFAs per cycle. This enzyme catalyzes the dehydration of the 3-hydroxyacyl-CoA intermediate into trans-2,3-enoyl-CoA, within each cycle of fatty acid elongation. Thereby, it participates in the production of VLCFAs of different chain lengths that are involved in multiple biological processes as precursors of membrane lipids and lipid mediators. Involved in Rac1-signaling pathways leading to the modulation of gene expression. This chain is Very-long-chain (3R)-3-hydroxyacyl-CoA dehydratase, found in Danio rerio (Zebrafish).